A 257-amino-acid chain; its full sequence is Type III pantothenate kinase (257 aa).

6–13 (DVGNTSTK) serves as a coordination point for ATP. A substrate-binding site is contributed by 109-112 (GADR). The Proton acceptor role is filled by Asp-111. Asp-132 provides a ligand contact to K(+). Thr-135 contributes to the ATP binding site. Residue Thr-187 coordinates substrate.

The protein belongs to the type III pantothenate kinase family. Homodimer. It depends on NH4(+) as a cofactor. The cofactor is K(+).

Its subcellular location is the cytoplasm. It carries out the reaction (R)-pantothenate + ATP = (R)-4'-phosphopantothenate + ADP + H(+). Its pathway is cofactor biosynthesis; coenzyme A biosynthesis; CoA from (R)-pantothenate: step 1/5. Functionally, catalyzes the phosphorylation of pantothenate (Pan), the first step in CoA biosynthesis. The protein is Type III pantothenate kinase of Anaplasma marginale (strain St. Maries).